Consider the following 692-residue polypeptide: Protein arginine N-methyltransferase 7 (692 aa).

SAM-dependent MTase PRMT-type domains lie at 14 to 359 (ENSW…YSLW) and 368 to 692 (AKTV…QEKR).

This sequence belongs to the class I-like SAM-binding methyltransferase superfamily. Protein arginine N-methyltransferase family. PRMT7 subfamily.

Functionally, essential arginine methyltransferase that can both catalyze the formation of omega-N monomethylarginine (MMA) and symmetrical dimethylarginine (sDMA). Specifically mediates the symmetrical dimethylation of arginine residues in the small nuclear ribonucleoproteins SmD1 and SmD3. This is Protein arginine N-methyltransferase 7 (Art7) from Drosophila persimilis (Fruit fly).